Here is a 254-residue protein sequence, read N- to C-terminus: Mediator of RNA polymerase II transcription subunit 4 (254 aa).

Residues 72–114 (RVHQEMQSLEKEVEKRDSDIQQLQKQLKEAEHILATAVYQAKE) adopt a coiled-coil conformation. Residues 215-254 (ILPPHHGNDFGLEPPGHNKENEDDVEAMSTDSSSSSSDSD) are disordered. The segment covering 243 to 254 (STDSSSSSSDSD) has biased composition (low complexity).

The protein belongs to the Mediator complex subunit 4 family. Component of the Mediator complex.

It is found in the nucleus. In terms of biological role, component of the Mediator complex, a coactivator involved in the regulated transcription of nearly all RNA polymerase II-dependent genes. Mediator functions as a bridge to convey information from gene-specific regulatory proteins to the basal RNA polymerase II transcription machinery. Mediator is recruited to promoters by direct interactions with regulatory proteins and serves as a scaffold for the assembly of a functional preinitiation complex with RNA polymerase II and the general transcription factors. In Danio rerio (Zebrafish), this protein is Mediator of RNA polymerase II transcription subunit 4 (med4).